A 259-amino-acid polypeptide reads, in one-letter code: MVKIKILKKTEDSITFILEGVSVAFANALRRTILGEVPTFAVDEVEFYENDSALFDEIIAHRLAMIPLKTPTDRFELDALELDDYTVTLSLEAEGPGIVYSGDLKSDDPDVKPVTPDIPIVKLAKGQRLVFNAYAKLGRGKDHAKWQPGFTYYKYFTRVHISKKINGWEKLAKLAKKRGLPTKENEEEVIVETIKPFYIPKEFEEYEGKEIWEEIVPDTYVFVVETNGELPVEEIVKIALRILMRKADRFINELQRLAG.

The protein belongs to the archaeal Rpo3/eukaryotic RPB3 RNA polymerase subunit family. As to quaternary structure, part of the RNA polymerase complex.

The protein localises to the cytoplasm. The enzyme catalyses RNA(n) + a ribonucleoside 5'-triphosphate = RNA(n+1) + diphosphate. In terms of biological role, DNA-dependent RNA polymerase (RNAP) catalyzes the transcription of DNA into RNA using the four ribonucleoside triphosphates as substrates. This Pyrococcus horikoshii (strain ATCC 700860 / DSM 12428 / JCM 9974 / NBRC 100139 / OT-3) protein is DNA-directed RNA polymerase subunit Rpo3.